Reading from the N-terminus, the 169-residue chain is Ion-translocating oxidoreductase complex subunit B (169 aa).

Positions 1–23 (MIISIIIFSILSFILGVIVSLVS) are hydrophobic. In terms of domain architecture, 4Fe-4S spans 30–89 (SNLSLINDIDELLPQMQCAQCGYPGCYAYSQAIVDGNENIYKCIPGGKEVVLKLENLLNK). Cys47, Cys50, Cys55, Cys72, Cys116, Cys119, Cys122, Cys126, Cys146, Cys149, Cys152, and Cys156 together coordinate [4Fe-4S] cluster. 4Fe-4S ferredoxin-type domains follow at residues 107-136 (SIVEIDENNCVGCSKCRLVCPVDAVVGTYN) and 137-166 (FRHTVLIDSCTGCNLCIPLCPTNCIKKKIM).

It belongs to the 4Fe4S bacterial-type ferredoxin family. RnfB subfamily. As to quaternary structure, the complex is composed of six subunits: RnfA, RnfB, RnfC, RnfD, RnfE and RnfG. [4Fe-4S] cluster serves as cofactor.

The protein localises to the cell inner membrane. In terms of biological role, part of a membrane-bound complex that couples electron transfer with translocation of ions across the membrane. The protein is Ion-translocating oxidoreductase complex subunit B of Buchnera aphidicola subsp. Baizongia pistaciae (strain Bp).